The following is a 63-amino-acid chain: Transmembrane protein ZNF593OS (63 aa).

Residues 30–50 form a helical membrane-spanning segment; that stretch reads LAGVVATVLAVLGLGGSCYAV.

It is found in the membrane. The polypeptide is Transmembrane protein ZNF593OS (Homo sapiens (Human)).